The primary structure comprises 48 residues: Delta-actitoxin-Bcg1b (48 aa).

3 disulfide bridges follow: Cys-4-Cys-45, Cys-6-Cys-35, and Cys-28-Cys-46.

It belongs to the sea anemone sodium channel inhibitory toxin family. Type I subfamily.

The protein resides in the secreted. Its subcellular location is the nematocyst. Functionally, binds to the sodium channels Nav1.1/SCN1A (EC(50)=165 nM), Nav1.5/SCN5A (EC(50)=103 nM) and Nav1.6/SCN8A (EC(50)=133 nM), thereby delaying their inactivation. Also inhibits Nav1.2/SCN2A, Nav1.3/SCN3A, and Nav1.4/SCN4A, but to a lesser extent. Inhibits Nav1.5 differently from isoforms Nav1.1 and Nav1.6. In Nav1.5 the effect consists in a right-shift of inactivation; whereas in both Nav1.1 and Nav1.6 the effect consists in an incomplete inactivation. In Bunodosoma cangicum (Sea anemone), this protein is Delta-actitoxin-Bcg1b.